A 189-amino-acid chain; its full sequence is Peptidyl-tRNA hydrolase (189 aa).

Tyrosine 17 contributes to the tRNA binding site. Histidine 22 (proton acceptor) is an active-site residue. TRNA is bound by residues phenylalanine 65, asparagine 67, and asparagine 113.

Belongs to the PTH family. In terms of assembly, monomer.

It localises to the cytoplasm. It carries out the reaction an N-acyl-L-alpha-aminoacyl-tRNA + H2O = an N-acyl-L-amino acid + a tRNA + H(+). Hydrolyzes ribosome-free peptidyl-tRNAs (with 1 or more amino acids incorporated), which drop off the ribosome during protein synthesis, or as a result of ribosome stalling. Functionally, catalyzes the release of premature peptidyl moieties from peptidyl-tRNA molecules trapped in stalled 50S ribosomal subunits, and thus maintains levels of free tRNAs and 50S ribosomes. This is Peptidyl-tRNA hydrolase from Mycoplasma genitalium (strain ATCC 33530 / DSM 19775 / NCTC 10195 / G37) (Mycoplasmoides genitalium).